We begin with the raw amino-acid sequence, 500 residues long: Probable cytosol aminopeptidase (500 aa).

Positions 268 and 273 each coordinate Mn(2+). Residue K280 is part of the active site. D291, D350, and E352 together coordinate Mn(2+). R354 is a catalytic residue.

This sequence belongs to the peptidase M17 family. The cofactor is Mn(2+).

The protein resides in the cytoplasm. It carries out the reaction Release of an N-terminal amino acid, Xaa-|-Yaa-, in which Xaa is preferably Leu, but may be other amino acids including Pro although not Arg or Lys, and Yaa may be Pro. Amino acid amides and methyl esters are also readily hydrolyzed, but rates on arylamides are exceedingly low.. The catalysed reaction is Release of an N-terminal amino acid, preferentially leucine, but not glutamic or aspartic acids.. Presumably involved in the processing and regular turnover of intracellular proteins. Catalyzes the removal of unsubstituted N-terminal amino acids from various peptides. This is Probable cytosol aminopeptidase from Azoarcus sp. (strain BH72).